The chain runs to 123 residues: Histone H2B (123 aa).

Residues 1-30 (MPPKTSGKAAKKAGKAQKNITKTDKKKKRK) are disordered. Position 2 is an N-methylproline; partial (Pro2). Lys44 bears the N6-succinyllysine mark. Ser110 carries O-linked (GlcNAc) serine glycosylation. An N6-succinyllysine mark is found at Lys114 and Lys118. Residue Lys118 forms a Glycyl lysine isopeptide (Lys-Gly) (interchain with G-Cter in ubiquitin) linkage.

Belongs to the histone H2B family. As to quaternary structure, the nucleosome is a histone octamer containing two molecules each of H2A, H2B, H3 and H4 assembled in one H3-H4 heterotetramer and two H2A-H2B heterodimers. The octamer wraps approximately 147 bp of DNA. Post-translationally, phosphorylated by the catalytic component of the Dbf4-dependent kinase (DDK) complex Cdc7. In terms of processing, monoubiquitination of Lys-118 by Bre1 gives a specific tag for epigenetic transcriptional activation and is also prerequisite for histone H3 'Lys-4' and 'Lys-79' methylation. Deubiquitination of Lys-118 by the SAGA complex is involved in activating transcription of a large subset of genes. Methylation at Pro-2 increases upon heat shock. Post-translationally, glcNAcylation at Ser-110 promotes monoubiquitination of Lys-118. It fluctuates in response to extracellular glucose, and associates with transcribed genes.

Its subcellular location is the nucleus. It localises to the chromosome. Core component of nucleosome. Nucleosomes wrap and compact DNA into chromatin, limiting DNA accessibility to the cellular machineries which require DNA as a template. Histones thereby play a central role in transcription regulation, DNA repair, DNA replication and chromosomal stability. DNA accessibility is regulated via a complex set of post-translational modifications of histones, also called histone code, and nucleosome remodeling. This is Histone H2B (His2B) from Drosophila erecta (Fruit fly).